We begin with the raw amino-acid sequence, 314 residues long: Ribonuclease Z (314 aa).

Residues histidine 61, histidine 63, aspartate 65, histidine 66, histidine 137, aspartate 207, and histidine 263 each contribute to the Zn(2+) site. Aspartate 65 functions as the Proton acceptor in the catalytic mechanism.

This sequence belongs to the RNase Z family. In terms of assembly, homodimer. It depends on Zn(2+) as a cofactor.

It catalyses the reaction Endonucleolytic cleavage of RNA, removing extra 3' nucleotides from tRNA precursor, generating 3' termini of tRNAs. A 3'-hydroxy group is left at the tRNA terminus and a 5'-phosphoryl group is left at the trailer molecule.. Functionally, zinc phosphodiesterase, which displays some tRNA 3'-processing endonuclease activity. Probably involved in tRNA maturation, by removing a 3'-trailer from precursor tRNA. This is Ribonuclease Z from Thermococcus kodakarensis (strain ATCC BAA-918 / JCM 12380 / KOD1) (Pyrococcus kodakaraensis (strain KOD1)).